Consider the following 324-residue polypeptide: MASYYEILDVPRSASPDDIKKAYRKKALQWHPDKNPDNKEFAEKKFKEVAEAYEVLSDKHKREIYDRYGREGLTGAGSGPSRSETGGAGPGFTFTFRSPEEVFREFFGSGDPFSELFDDLGVFSELQNQGPRLTGPFFTFSSSFPANSDFSSSSFSFSPGAGAFRSVSTSTTFVQGRRITTRRIMENGQERVEVEEDGQLKSVSINGVPDDLALGLELSRREQQPSVAPGLGVMQVRPTSLSRPPDHDLSEDEDLQLAMAYSLSEMEAAGQKPAGGRGAQQRQHGQPKAQHRDLDVGGTHKSVRGEAAKLSPSSEEKASRCHIL.

At A2 the chain carries N-acetylalanine. The 67-residue stretch at 3–69 (SYYEILDVPR…HKREIYDRYG (67 aa)) folds into the J domain. Disordered regions lie at residues 70-91 (REGL…AGPG) and 218-324 (LSRR…CHIL). 2 consecutive UIM domains span residues 207 to 226 (GVPD…QQPS) and 250 to 269 (SEDE…MEAA). The residue at position 311 (S311) is a Phosphoserine. Basic and acidic residues predominate over residues 314–324 (SEEKASRCHIL). The residue at position 321 (C321) is a Cysteine methyl ester. C321 carries the S-geranylgeranyl cysteine lipid modification. Residues 321-324 (CHIL) carry the CAAX motif motif. Positions 322 to 324 (HIL) are cleaved as a propeptide — removed in mature form.

As to quaternary structure, interacts with HSP70 (HSPA1A or HSPA1B). Interacts with HSPA8/Hsc70. Interacts with PSMA3 and most probably with the whole proteasomal complex. In terms of processing, ubiquitinated by STUB1; does not lead to proteasomal degradation.

The protein resides in the cytoplasm. The protein localises to the nucleus. It is found in the endoplasmic reticulum membrane. Functionally, functions as a co-chaperone, regulating the substrate binding and activating the ATPase activity of chaperones of the HSP70/heat shock protein 70 family. In parallel, also contributes to the ubiquitin-dependent proteasomal degradation of misfolded proteins. Thereby, may regulate the aggregation and promote the functional recovery of misfolded proteins like HTT, MC4R, PRKN, RHO and SOD1 and be crucial for many biological processes. Isoform 1 which is localized to the endoplasmic reticulum membranes may specifically function in ER-associated protein degradation of misfolded proteins. The chain is DnaJ homolog subfamily B member 2 from Mus musculus (Mouse).